The primary structure comprises 268 residues: 3-methyl-2-oxobutanoate hydroxymethyltransferase (268 aa).

Residues Asp44 and Asp83 each contribute to the Mg(2+) site. 3-methyl-2-oxobutanoate-binding positions include 44–45 (DS), Asp83, and Lys113. Glu115 provides a ligand contact to Mg(2+). Catalysis depends on Glu182, which acts as the Proton acceptor.

This sequence belongs to the PanB family. As to quaternary structure, homodecamer; pentamer of dimers. Mg(2+) is required as a cofactor.

It localises to the cytoplasm. The enzyme catalyses 3-methyl-2-oxobutanoate + (6R)-5,10-methylene-5,6,7,8-tetrahydrofolate + H2O = 2-dehydropantoate + (6S)-5,6,7,8-tetrahydrofolate. It functions in the pathway cofactor biosynthesis; (R)-pantothenate biosynthesis; (R)-pantoate from 3-methyl-2-oxobutanoate: step 1/2. Catalyzes the reversible reaction in which hydroxymethyl group from 5,10-methylenetetrahydrofolate is transferred onto alpha-ketoisovalerate to form ketopantoate. This is 3-methyl-2-oxobutanoate hydroxymethyltransferase from Synechococcus elongatus (strain ATCC 33912 / PCC 7942 / FACHB-805) (Anacystis nidulans R2).